Reading from the N-terminus, the 436-residue chain is Phosphoribosylamine--glycine ligase (436 aa).

Positions 106–318 (RKLFEDYDIE…LADVCQAIVD (213 aa)) constitute an ATP-grasp domain. 133 to 196 (LDDFDRDVVV…EERLIGEEFT (64 aa)) provides a ligand contact to ATP. Mg(2+) is bound by residues Gln-276, Glu-288, and Asn-290. Mn(2+)-binding residues include Gln-276, Glu-288, and Asn-290.

This sequence belongs to the GARS family. The cofactor is Mg(2+). Mn(2+) is required as a cofactor.

It carries out the reaction 5-phospho-beta-D-ribosylamine + glycine + ATP = N(1)-(5-phospho-beta-D-ribosyl)glycinamide + ADP + phosphate + H(+). Its pathway is purine metabolism; IMP biosynthesis via de novo pathway; N(1)-(5-phospho-D-ribosyl)glycinamide from 5-phospho-alpha-D-ribose 1-diphosphate: step 2/2. The sequence is that of Phosphoribosylamine--glycine ligase from Methanobrevibacter smithii (strain ATCC 35061 / DSM 861 / OCM 144 / PS).